Consider the following 417-residue polypeptide: Serine hydroxymethyltransferase 2 (417 aa).

Residues Leu121 and 125–127 (GHL) contribute to the (6S)-5,6,7,8-tetrahydrofolate site. Lys230 is modified (N6-(pyridoxal phosphate)lysine). 355-357 (SPF) contacts (6S)-5,6,7,8-tetrahydrofolate.

This sequence belongs to the SHMT family. In terms of assembly, homodimer. Pyridoxal 5'-phosphate serves as cofactor.

The protein localises to the cytoplasm. It catalyses the reaction (6R)-5,10-methylene-5,6,7,8-tetrahydrofolate + glycine + H2O = (6S)-5,6,7,8-tetrahydrofolate + L-serine. The protein operates within one-carbon metabolism; tetrahydrofolate interconversion. It functions in the pathway amino-acid biosynthesis; glycine biosynthesis; glycine from L-serine: step 1/1. In terms of biological role, catalyzes the reversible interconversion of serine and glycine with tetrahydrofolate (THF) serving as the one-carbon carrier. This reaction serves as the major source of one-carbon groups required for the biosynthesis of purines, thymidylate, methionine, and other important biomolecules. Also exhibits THF-independent aldolase activity toward beta-hydroxyamino acids, producing glycine and aldehydes, via a retro-aldol mechanism. The sequence is that of Serine hydroxymethyltransferase 2 from Colwellia psychrerythraea (strain 34H / ATCC BAA-681) (Vibrio psychroerythus).